The following is a 1598-amino-acid chain: Fatty acid synthase subunit alpha (1598 aa).

A disordered region spans residues 96 to 134 (RTQPHKSSAPQEPVPKAAPKAAPPVPVATAPLPEPGRQV). The segment covering 104–115 (APQEPVPKAAPK) has biased composition (low complexity). Residues 143-221 (DVPIQSRDVI…QIVSGSTSTT (79 aa)) form the Carrier domain. S181 bears the O-(pantetheine 4'-phosphoryl)serine mark. Residues 543-784 (LKGKTVLLTG…LAALLVNPFA (242 aa)) form a ketoreductase (KR) domain region. The tract at residues 818 to 844 (KQDSTSTPTHQHLPSHHHVDEPEIGKP) is disordered. Positions 820-829 (DSTSTPTHQH) are enriched in polar residues. The 533-residue stretch at 992–1524 (HEIVLTRDLA…QKGAQAIIVH (533 aa)) folds into the Ketosynthase family 3 (KS3) domain. C1175 functions as the For beta-ketoacyl synthase activity in the catalytic mechanism. Residues 1280–1301 (ASDKTGRSVPSPGKGTLTNARE) form a disordered region. Residues H1409 and H1450 each act as for beta-ketoacyl synthase activity in the active site.

It belongs to the thiolase-like superfamily. Fungal fatty acid synthetase subunit alpha family. In terms of assembly, fatty acid synthase is composed of alpha and beta subunits.

It catalyses the reaction acetyl-CoA + n malonyl-CoA + 2n NADPH + 4n H(+) = a long-chain-acyl-CoA + n CoA + n CO2 + 2n NADP(+).. The enzyme catalyses a fatty acyl-[ACP] + malonyl-[ACP] + H(+) = a 3-oxoacyl-[ACP] + holo-[ACP] + CO2. It carries out the reaction a (3R)-hydroxyacyl-[ACP] + NADP(+) = a 3-oxoacyl-[ACP] + NADPH + H(+). It functions in the pathway mycotoxin biosynthesis. Functionally, fatty acid synthase subunit alpha; part of the gene cluster that mediates the biosynthesis of gramillins A and B, bicyclic lipopeptides that induce cell death in maize leaves but not in wheat leaves. The nonribosomal peptide synthetase GRA1 incorporates respectively a glutamic adic (Glu), a leucine (Leu), a serine (Ser), a hydroxyglutamine (HOGln), a 2-amino decanoic acid, and 2 cysteins (CysB and CysA). The biosynthesis of 2-amino decanoic acid incorporated in gramillins could be initiated by a fatty acid synthase composed of the alpha and beta subunits FGSG_00036 and FGSG_11656. The cytochrome P450 monooxygenase FGSG_15680 could hydroxylate the fatty acid chain. Subsequent oxidation to the ketone by the oxidoreductase FGSG_00048 and transamination by aminotransferase FGSG_00049 could form 2-amino-decanoic acid. On the other hand, FGSG_15680 could also be responsible for the HO-modified glutamine at the gamma-position. Whether hydroxylation occurs on the fully assembled product or on the Gln residue prior to assembly into the gramillins requires further proof. The thioredoxin FGSG_00043 could also be required for the disulfide-bond formation between CysA and CysB. The specific involvement of the remaining proteins from the cluster is more difficult to discern, but could have broader regulatory (FGSG_00040 and FGSG_11657) or enzymatic functions (FGSG_00044 and FGSG_00045). The final C-domain of GRA1 does not possess the expected sequence of a termination CT domain, often implicated in macrocyclization and release of a cyclopeptidein fungal NRPs; and the thioesterase FGSG_00047 may act in concert with the terminal C-domain of GRA1 to catalyze the formation of the macrocyclic anhydride and release of the products. The polypeptide is Fatty acid synthase subunit alpha (Gibberella zeae (strain ATCC MYA-4620 / CBS 123657 / FGSC 9075 / NRRL 31084 / PH-1) (Wheat head blight fungus)).